An 86-amino-acid polypeptide reads, in one-letter code: Large ribosomal subunit protein uL23 (86 aa).

The protein belongs to the universal ribosomal protein uL23 family. As to quaternary structure, part of the 50S ribosomal subunit. Contacts protein L29.

Binds to 23S rRNA. One of the proteins that surrounds the polypeptide exit tunnel on the outside of the ribosome. The sequence is that of Large ribosomal subunit protein uL23 from Thermococcus kodakarensis (strain ATCC BAA-918 / JCM 12380 / KOD1) (Pyrococcus kodakaraensis (strain KOD1)).